The following is a 192-amino-acid chain: NADH dehydrogenase [ubiquinone] iron-sulfur protein 3 (192 aa).

This sequence belongs to the complex I 30 kDa subunit family. In terms of assembly, complex I is composed of about 45 different subunits. This is a component of the iron-sulfur (IP) fragment of the enzyme.

The protein localises to the mitochondrion inner membrane. The catalysed reaction is a ubiquinone + NADH + 5 H(+)(in) = a ubiquinol + NAD(+) + 4 H(+)(out). In terms of biological role, core subunit of the mitochondrial membrane respiratory chain NADH dehydrogenase (Complex I) that is believed to belong to the minimal assembly required for catalysis. Complex I functions in the transfer of electrons from NADH to the respiratory chain. The immediate electron acceptor for the enzyme is believed to be ubiquinone. The chain is NADH dehydrogenase [ubiquinone] iron-sulfur protein 3 (NAD9) from Patellifolia webbiana (Patellaria webbiana).